The primary structure comprises 267 residues: Cell cycle checkpoint protein RAD1 homolog mrt-2 (267 aa).

This sequence belongs to the Rad1 family. As to quaternary structure, probable component of the toroidal 9-1-1 (RAD9-RAD1-HUS1) complex, composed of hpr-9, mrt-2 and hus-1. Interacts with hus-1. Might associate with hpr-9.

The protein resides in the nucleus. It carries out the reaction Exonucleolytic cleavage in the 3'- to 5'-direction to yield nucleoside 5'-phosphates.. In terms of biological role, may be a component of the 9-1-1 cell-cycle checkpoint response complex that plays a major role in DNA repair. Promotes DNA double strand break-induced cell cycle arrest and apoptosis, thereby playing a role in genome stability. Also required for telomere length maintenance and germline immortality. May possess 3'-&gt;5' double stranded DNA exonuclease activity. This chain is Cell cycle checkpoint protein RAD1 homolog mrt-2, found in Caenorhabditis elegans.